The chain runs to 69 residues: Sec-independent protein translocase protein TatA (69 aa).

Residues 1–21 (MFGLGGQELVLILLIVLLLFG) form a helical membrane-spanning segment. Positions 47–63 (EEEFNKSMDDNPKKEKA) are enriched in basic and acidic residues. Residues 47–69 (EEEFNKSMDDNPKKEKATTASKS) form a disordered region.

It belongs to the TatA/E family. Forms a complex with TatC.

The protein localises to the cell inner membrane. Part of the twin-arginine translocation (Tat) system that transports large folded proteins containing a characteristic twin-arginine motif in their signal peptide across membranes. TatA could form the protein-conducting channel of the Tat system. The chain is Sec-independent protein translocase protein TatA from Chlorobium chlorochromatii (strain CaD3).